A 428-amino-acid chain; its full sequence is 3-phosphoshikimate 1-carboxyvinyltransferase (428 aa).

3-phosphoshikimate-binding residues include Lys-21, Ser-22, and Arg-26. Phosphoenolpyruvate is bound at residue Lys-21. Phosphoenolpyruvate contacts are provided by Gly-91 and Arg-119. 3-phosphoshikimate contacts are provided by Ser-164, Gln-166, Asp-313, and Lys-340. Position 166 (Gln-166) interacts with phosphoenolpyruvate. Residue Asp-313 is the Proton acceptor of the active site. Arg-344 and Arg-386 together coordinate phosphoenolpyruvate.

Belongs to the EPSP synthase family. Monomer.

The protein resides in the cytoplasm. The enzyme catalyses 3-phosphoshikimate + phosphoenolpyruvate = 5-O-(1-carboxyvinyl)-3-phosphoshikimate + phosphate. It participates in metabolic intermediate biosynthesis; chorismate biosynthesis; chorismate from D-erythrose 4-phosphate and phosphoenolpyruvate: step 6/7. Its function is as follows. Catalyzes the transfer of the enolpyruvyl moiety of phosphoenolpyruvate (PEP) to the 5-hydroxyl of shikimate-3-phosphate (S3P) to produce enolpyruvyl shikimate-3-phosphate and inorganic phosphate. This Campylobacter jejuni subsp. jejuni serotype O:6 (strain 81116 / NCTC 11828) protein is 3-phosphoshikimate 1-carboxyvinyltransferase.